Reading from the N-terminus, the 89-residue chain is uncharacterized protein (89 aa).

The next 3 helical transmembrane spans lie at 5–27, 32–51, and 63–85; these read TLTEYCLLIFFTGFYLAVTGFTA, LYIGIALIYIFSHIFSKRLL, and LFFSVLAIIGSVFITVLCIALVA.

It localises to the cell membrane. This is an uncharacterized protein from Bacillus subtilis (strain 168).